We begin with the raw amino-acid sequence, 118 residues long: CLAVATA3/ESR (CLE)-related protein 12 (118 aa).

The first 35 residues, 1–35 (MLRISSSSSMALKFSQILFIVLWLSLFFLLLHHLY), serve as a signal peptide directing secretion. Composition is skewed to basic and acidic residues over residues 75 to 91 (TPFH…RSGE) and 98 to 108 (IDPRYGVEKRR). The disordered stretch occupies residues 75–118 (TPFHSRDNSRHNHRSGEQYDGDEIDPRYGVEKRRVPSGPNPLHH). Residues P110 and P113 each carry the hydroxyproline modification. P113 carries an O-linked (Ara...) hydroxyproline glycan.

The protein belongs to the CLV3/ESR signal peptide family. In terms of processing, the O-glycosylation (arabinosylation) of the hydroxyproline Pro-113 enhances binding affinity of the CLE12p peptide for its receptor. Mostly expressed in seedlings, roots, flowers, stems and apex, and, to a lower extent, in leaves and siliques.

The protein resides in the secreted. The protein localises to the extracellular space. Functionally, extracellular signal peptide that regulates cell fate. Represses root apical meristem maintenance. In Arabidopsis thaliana (Mouse-ear cress), this protein is CLAVATA3/ESR (CLE)-related protein 12.